We begin with the raw amino-acid sequence, 840 residues long: MRSVITTLTLVASVGLAVAENGFDGWLRYAPVSCHGACQKSLPSHIVTLDPTESSPISVAGQEIQDGLQRMFKMHATVEPKGCSTRSSVIIGTLDAYNHACKDADPVPELEEDGFWLNTKDGKVQIIGQSERGALYGAYEYLSMLSQGNFAPVSYTTSPHAPIRWVNQWDNMDGSMEHGYGGLSIFFKDGVIPQDLSRVKQYARLLASIRINGIIVNNVNANASLLKPENMDGLARIADIFRPYGVKVGISLNFASPSTLGGLNTYDPLDESVISWWGGITDELYKRVPDMAGYLVKANSEGQPGPTTYNRTLAEGANLFARALKPHGGIVMFRAFVYDHHISEENWYNDRANAAVDFFKPLDGKFEENVVVQIKYGPIDFQVREPVSPLFANLYKTNTAIELQVTQEYLGQQSHLVYLPPLWQTILGFDLRVDGKPSPTRDIISGQRFNRPLGGWAAVVNVGTNTTWLGSHLALSNLYAYGRLAWEPTLDSQDILQDWIRMTFGLDRRVLDTITKMSMESWPAYENYSGNLGIQTLTDILYTHYGPNPASQDGNGWGQWTRADHEAIGMDRTIKNGTKFTGQYPAEVAQVYENIETTPDDLLLWFHHVPYTQRLQSGKTVIQHFYDAHYAGADTAQTFVSQWESLRGKIDPERYEHVLTRLIYQAGHSIVWRDAINEFYHNLSGIADEKQRVGHHPWRIEAEDMKLDGYVPYDVNPFETASNTKAIVTATNSTTGTASTQLDFKTGKYDLGINYYDFYGGKSQWTAYLNDRLVGQWQGNNEDVLSHELSVYLDGHSATRITFRDVKIHKGDRLKIVGKPDGMEPAPLDYVVLLPQGIVD.

An N-terminal signal peptide occupies residues 1–19 (MRSVITTLTLVASVGLAVA). 7 N-linked (GlcNAc...) asparagine glycosylation sites follow: Asn222, Asn310, Asn465, Asn527, Asn576, Asn682, and Asn732.

The protein belongs to the glycosyl hydrolase 67 family.

It localises to the secreted. It catalyses the reaction an alpha-D-glucuronoside + H2O = D-glucuronate + an alcohol. Its function is as follows. Alpha-glucuronidase involved in the hydrolysis of xylan, a major structural heterogeneous polysaccharide found in plant biomass representing the second most abundant polysaccharide in the biosphere, after cellulose. Releases 4-O-methylglucuronic acid from xylan. In Aspergillus clavatus (strain ATCC 1007 / CBS 513.65 / DSM 816 / NCTC 3887 / NRRL 1 / QM 1276 / 107), this protein is Probable alpha-glucuronidase A (aguA).